We begin with the raw amino-acid sequence, 335 residues long: Acetyl-coenzyme A carboxylase carboxyl transferase subunit alpha (335 aa).

The CoA carboxyltransferase C-terminal domain maps to 40–294 (QLETLAARRR…KEAIEKHLNA (255 aa)).

Belongs to the AccA family. In terms of assembly, acetyl-CoA carboxylase is a heterohexamer composed of biotin carboxyl carrier protein (AccB), biotin carboxylase (AccC) and two subunits each of ACCase subunit alpha (AccA) and ACCase subunit beta (AccD).

The protein resides in the cytoplasm. It catalyses the reaction N(6)-carboxybiotinyl-L-lysyl-[protein] + acetyl-CoA = N(6)-biotinyl-L-lysyl-[protein] + malonyl-CoA. It functions in the pathway lipid metabolism; malonyl-CoA biosynthesis; malonyl-CoA from acetyl-CoA: step 1/1. In terms of biological role, component of the acetyl coenzyme A carboxylase (ACC) complex. First, biotin carboxylase catalyzes the carboxylation of biotin on its carrier protein (BCCP) and then the CO(2) group is transferred by the carboxyltransferase to acetyl-CoA to form malonyl-CoA. The polypeptide is Acetyl-coenzyme A carboxylase carboxyl transferase subunit alpha (Prochlorococcus marinus (strain MIT 9215)).